The following is a 195-amino-acid chain: 3-isopropylmalate dehydratase small subunit (195 aa).

The protein belongs to the LeuD family. LeuD type 1 subfamily. As to quaternary structure, heterodimer of LeuC and LeuD.

It carries out the reaction (2R,3S)-3-isopropylmalate = (2S)-2-isopropylmalate. Its pathway is amino-acid biosynthesis; L-leucine biosynthesis; L-leucine from 3-methyl-2-oxobutanoate: step 2/4. Its function is as follows. Catalyzes the isomerization between 2-isopropylmalate and 3-isopropylmalate, via the formation of 2-isopropylmaleate. The sequence is that of 3-isopropylmalate dehydratase small subunit from Salinispora arenicola (strain CNS-205).